The chain runs to 305 residues: Nuclear egress protein 1 (305 aa).

The tract at residues 1-42 is disordered; it reads MYDIAPRRSGSRPGPGRDKTRRRSRFSAAGNPGVERRASRKS. The segment at 105–224 adopts a CCCH-type zinc-finger fold; that stretch reads CLTLSGMGYY…YVIFPGTSAH (120 aa).

This sequence belongs to the herpesviridae NEC1 protein family. Forms a heterohexameric complex with NEC2. Interacts with capsid vertex specific component 2/CVC2; this interaction directs the capsid to the host inner nuclear membrane to initiate budding. Post-translationally, phosphorylated at serine residues in the N-terminus. This phosphorylation regulates the localization within the inner nuclear membrane.

The protein resides in the host nucleus inner membrane. Plays an essential role in virion nuclear egress, the first step of virion release from infected cell. Within the host nucleus, NEC1 interacts with the newly formed capsid through the vertexes and directs it to the inner nuclear membrane by associating with NEC2. Induces the budding of the capsid at the inner nuclear membrane as well as its envelopment into the perinuclear space. There, the NEC1/NEC2 complex promotes the fusion of the enveloped capsid with the outer nuclear membrane and the subsequent release of the viral capsid into the cytoplasm where it will reach the secondary budding sites in the host Golgi or trans-Golgi network. This chain is Nuclear egress protein 1, found in Human herpesvirus 2 (strain HG52) (HHV-2).